We begin with the raw amino-acid sequence, 274 residues long: Formamidopyrimidine-DNA glycosylase (274 aa).

The active-site Schiff-base intermediate with DNA is the proline 2. Residue glutamate 3 is the Proton donor of the active site. The Proton donor; for beta-elimination activity role is filled by lysine 59. Residues histidine 93, arginine 112, and arginine 155 each contribute to the DNA site. Residues 240–274 (QVYGRTGRPCPRCGQPLERVRLGGRSTHFCPRCQV) form an FPG-type zinc finger. The Proton donor; for delta-elimination activity role is filled by arginine 264.

The protein belongs to the FPG family. Monomer. Zn(2+) is required as a cofactor.

The catalysed reaction is Hydrolysis of DNA containing ring-opened 7-methylguanine residues, releasing 2,6-diamino-4-hydroxy-5-(N-methyl)formamidopyrimidine.. It carries out the reaction 2'-deoxyribonucleotide-(2'-deoxyribose 5'-phosphate)-2'-deoxyribonucleotide-DNA = a 3'-end 2'-deoxyribonucleotide-(2,3-dehydro-2,3-deoxyribose 5'-phosphate)-DNA + a 5'-end 5'-phospho-2'-deoxyribonucleoside-DNA + H(+). In terms of biological role, involved in base excision repair of DNA damaged by oxidation or by mutagenic agents. Acts as a DNA glycosylase that recognizes and removes damaged bases. Has a preference for oxidized purines, such as 7,8-dihydro-8-oxoguanine (8-oxoG). Has AP (apurinic/apyrimidinic) lyase activity and introduces nicks in the DNA strand. Cleaves the DNA backbone by beta-delta elimination to generate a single-strand break at the site of the removed base with both 3'- and 5'-phosphates. This chain is Formamidopyrimidine-DNA glycosylase, found in Moorella thermoacetica (strain ATCC 39073 / JCM 9320).